The following is a 319-amino-acid chain: Ribonuclease Z (319 aa).

Histidine 62, histidine 64, aspartate 66, histidine 67, histidine 145, aspartate 215, and histidine 273 together coordinate Zn(2+). Aspartate 66 functions as the Proton acceptor in the catalytic mechanism.

This sequence belongs to the RNase Z family. As to quaternary structure, homodimer. Zn(2+) serves as cofactor.

It carries out the reaction Endonucleolytic cleavage of RNA, removing extra 3' nucleotides from tRNA precursor, generating 3' termini of tRNAs. A 3'-hydroxy group is left at the tRNA terminus and a 5'-phosphoryl group is left at the trailer molecule.. In terms of biological role, zinc phosphodiesterase, which displays some tRNA 3'-processing endonuclease activity. Probably involved in tRNA maturation, by removing a 3'-trailer from precursor tRNA. In Borrelia recurrentis (strain A1), this protein is Ribonuclease Z.